Reading from the N-terminus, the 311-residue chain is MTKNQTWVTEFILLGFPLSLRIQMLLSGLFSLLYVFTLLGNGAILGLIWLDSRLHTPMYFFLSHLAIIDISYASNNVPKMLTNLGLNKRKTISFVPCTMQTFLYMAFAHTECLILVMMSYDRYMAICHPLQYSVIMRWGVCTVLAVTSWACGSLLALVHVVLILRLPFCGPHEINHFFCEILSVLKLACADTWLNQVVIFAASVFILVGPLCLVLVSYSRILAAILRIQSGEGRRKAFSTCSSHLCMVGLFFGSAIVMYMAPKSRHPEEQQKVLSLFYSLFNPMLNPLIYSLRNAEVKGALKRVLWKQRSK.

Over 1 to 24 (MTKNQTWVTEFILLGFPLSLRIQM) the chain is Extracellular. An N-linked (GlcNAc...) asparagine glycan is attached at Asn-4. Residues 25-48 (LLSGLFSLLYVFTLLGNGAILGLI) form a helical membrane-spanning segment. Over 49–56 (WLDSRLHT) the chain is Cytoplasmic. Residues 57-78 (PMYFFLSHLAIIDISYASNNVP) traverse the membrane as a helical segment. The Extracellular portion of the chain corresponds to 79–100 (KMLTNLGLNKRKTISFVPCTMQ). Cys-97 and Cys-189 are disulfide-bonded. The helical transmembrane segment at 101–120 (TFLYMAFAHTECLILVMMSY) threads the bilayer. The Cytoplasmic segment spans residues 121–139 (DRYMAICHPLQYSVIMRWG). Residues 140 to 158 (VCTVLAVTSWACGSLLALV) traverse the membrane as a helical segment. The Extracellular segment spans residues 159–196 (HVVLILRLPFCGPHEINHFFCEILSVLKLACADTWLNQ). Residues 197 to 219 (VVIFAASVFILVGPLCLVLVSYS) traverse the membrane as a helical segment. Over 220–236 (RILAAILRIQSGEGRRK) the chain is Cytoplasmic. Residues 237-259 (AFSTCSSHLCMVGLFFGSAIVMY) form a helical membrane-spanning segment. Topologically, residues 260–272 (MAPKSRHPEEQQK) are extracellular. The chain crosses the membrane as a helical span at residues 273–292 (VLSLFYSLFNPMLNPLIYSL). Topologically, residues 293-311 (RNAEVKGALKRVLWKQRSK) are cytoplasmic.

Belongs to the G-protein coupled receptor 1 family.

The protein resides in the cell membrane. In terms of biological role, odorant receptor. This chain is Olfactory receptor 2A5 (OR2A5), found in Homo sapiens (Human).